Consider the following 262-residue polypeptide: Homeobox protein vent1 (262 aa).

2 stretches are compositionally biased toward basic and acidic residues: residues 16 to 26 and 44 to 55; these read REEAPDGKDSV and YAKEIPRRKDGQ. Residues 16–129 are disordered; sequence REEAPDGKDS…KSPKSDLQRR (114 aa). Residues 58-79 are compositionally biased toward polar residues; the sequence is GEITSFQCSSEEARNRQFSNPS. The segment covering 114 to 128 has biased composition (basic and acidic residues); sequence DTEHRSKSPKSDLQR. Positions 127 to 186 form a DNA-binding region, homeobox; sequence QRRLRTAFTPQQITRLEQAFNKQRYLGASERKKLATSLQLSEIQVKTWFQNRRMKLKRQI.

The protein localises to the nucleus. Its function is as follows. Transcriptional repressor. Cooperates with vent2 in a ventral signaling pathway downstream of bmp4, which antagonizes the Spemann organizer and dorsal mesoderm formation, and leads to ventral mesoderm formation. Acts downstream of bmp4 to repress transcription of foxa4-B/XFD-1'. Binds to DNA with preference for the target sequence 5'-CTATT[T/C]G-3'. Also binds 5'-TGCATTTTG-3' at a lower frequency, and occasionally 5'-TTGATC-3'. Binds to the homeobox 2 (HBX2) repressor element in the promoter of the myf5 gene. Cooperates with vent2 to repress myf5 expression in the ventral domain. This Xenopus tropicalis (Western clawed frog) protein is Homeobox protein vent1.